The chain runs to 349 residues: DNA replication and repair protein RecF (349 aa).

30-37 (GKNGSGKT) lines the ATP pocket.

The protein belongs to the RecF family.

The protein resides in the cytoplasm. Functionally, the RecF protein is involved in DNA metabolism; it is required for DNA replication and normal SOS inducibility. RecF binds preferentially to single-stranded, linear DNA. It also seems to bind ATP. The polypeptide is DNA replication and repair protein RecF (Francisella tularensis subsp. mediasiatica (strain FSC147)).